Reading from the N-terminus, the 859-residue chain is Toll-like receptor 5 (859 aa).

Positions 1-26 are cleaved as a signal peptide; sequence MACQLDLLIGVIFMASPVLVISPCSS. Residues 27-641 lie on the Extracellular side of the membrane; sequence DGRIAFFRGC…EEEAMRSLKF (615 aa). N-linked (GlcNAc...) asparagine glycans are attached at residues Asn37, Asn46, and Asn84. LRR repeat units follow at residues 45 to 69, 72 to 94, 96 to 118, 121 to 144, 147 to 167, 172 to 193, 198 to 212, 215 to 230, and 235 to 236; these read LNTT…SFPL, RLQL…AFRN, PNLR…AFQG, HLLE…YFRN, SLAR…HSSF, SLSD…ELEP, TLSF…LFSR, VGWE…VRLE, and SE. An N-linked (GlcNAc...) asparagine glycan is attached at Asn246. 6 LRR repeats span residues 261 to 285, 290 to 302, 314 to 335, 338 to 356, 386 to 402, and 413 to 432; these read LKHH…TFAS, SVLQ…GFIF, DLKM…AFYG, SLQV…YNSN, TLQT…AIGF, and GNKL…LELS. Residue Asn343 is glycosylated (N-linked (GlcNAc...) asparagine). A glycan (N-linked (GlcNAc...) asparagine) is linked at Asn438. 5 LRR repeats span residues 450–471, 475–496, 504–525, 528–547, and 550–568; these read QLQF…HTPS, SLEQ…GLCW, RLQI…IFND, ALRM…PGSL, and NLEI…DPAL. Positions 580-632 constitute an LRRCT domain; it reads NEFVCNCELSTFISWLNQTNVTLFGSPADVYCMYPNSLLGGSLYNISTEDCDE. 2 disulfide bridges follow: Cys584–Cys611 and Cys586–Cys630. N-linked (GlcNAc...) asparagine glycosylation is found at Asn596, Asn599, and Asn624. A helical transmembrane segment spans residues 642-662; the sequence is SLFILCTVTLTLFLVITLVVI. The Cytoplasmic segment spans residues 663 to 859; it reads KFRGICFLCY…IQLRTIATIS (197 aa). Residues 692-837 form the TIR domain; it reads YRYDAYFCFS…WFLDKLSGCI (146 aa). Tyr799 is subject to Phosphotyrosine.

The protein belongs to the Toll-like receptor family. As to quaternary structure, homodimer. Interacts with MYD88 (via TIR domain). Interacts with TICAM1 (via TIR domain). Interacts with UNC93B1; this interaction is essential for proper TLR5 localization to the plasma membrane. Post-translationally, phosphorylated at Tyr-799 upon flagellin binding; required for signaling. Highly expressed in liver. Detected in lung and at very low levels in most other tissues.

The protein localises to the membrane. Pattern recognition receptor (PRR) located on the cell surface that participates in the activation of innate immunity and inflammatory response. Recognizes small molecular motifs named pathogen-associated molecular pattern (PAMPs) expressed by pathogens and microbe-associated molecular patterns (MAMPs) usually expressed by resident microbiota. Upon ligand binding such as bacterial flagellins, recruits intracellular adapter proteins MYD88 and TRIF leading to NF-kappa-B activation, cytokine secretion and induction of the inflammatory response. Plays thereby an important role in the relationship between the intestinal epithelium and enteric microbes and contributes to the gut microbiota composition throughout life. The polypeptide is Toll-like receptor 5 (Tlr5) (Mus musculus (Mouse)).